Reading from the N-terminus, the 410-residue chain is Serine proteinase inhibitor A3K (410 aa).

A signal peptide spans 1-24; that stretch reads MPSAISRGLLLLAGLCYLVFGIMA. N-linked (GlcNAc...) asparagine glycosylation is found at Asn-62, Asn-99, Asn-162, Asn-229, and Asn-263. Residues 360–381 form an RCL region; that stretch reads GTEAAAATVLEATRTARPPRLS.

This sequence belongs to the serpin family.

Its subcellular location is the secreted. The protein resides in the extracellular space. Contrapsin inhibits trypsin-like proteases. This is Serine proteinase inhibitor A3K (SERPINA3K) from Cavia porcellus (Guinea pig).